The chain runs to 241 residues: Small ribosomal subunit protein uS2 (241 aa).

Belongs to the universal ribosomal protein uS2 family.

This Sodalis glossinidius (strain morsitans) protein is Small ribosomal subunit protein uS2.